The chain runs to 290 residues: Ribosomal RNA small subunit methyltransferase A (290 aa).

S-adenosyl-L-methionine-binding residues include N27, L29, G54, E75, D100, and N125.

It belongs to the class I-like SAM-binding methyltransferase superfamily. rRNA adenine N(6)-methyltransferase family. RsmA subfamily.

It localises to the cytoplasm. The catalysed reaction is adenosine(1518)/adenosine(1519) in 16S rRNA + 4 S-adenosyl-L-methionine = N(6)-dimethyladenosine(1518)/N(6)-dimethyladenosine(1519) in 16S rRNA + 4 S-adenosyl-L-homocysteine + 4 H(+). In terms of biological role, specifically dimethylates two adjacent adenosines (A1518 and A1519) in the loop of a conserved hairpin near the 3'-end of 16S rRNA in the 30S particle. May play a critical role in biogenesis of 30S subunits. This chain is Ribosomal RNA small subunit methyltransferase A, found in Streptococcus agalactiae serotype Ia (strain ATCC 27591 / A909 / CDC SS700).